A 1049-amino-acid polypeptide reads, in one-letter code: Retinoblastoma-like protein 1 (1049 aa).

A phosphothreonine mark is found at threonine 332, threonine 369, and threonine 385. A domain A region spans residues threonine 385 to lysine 584. A pocket; binds T and E1A region spans residues threonine 385–tyrosine 944. A spacer region spans residues valine 585–serine 779. 4 positions are modified to phosphoserine: serine 640, serine 650, serine 748, and serine 761. The tract at residues lysine 780–tyrosine 944 is domain B. Serine 959, serine 970, and serine 983 each carry phosphoserine. A Phosphothreonine modification is found at threonine 992. Serine 1004 and serine 1022 each carry phosphoserine.

It belongs to the retinoblastoma protein (RB) family. In terms of assembly, component of the DREAM complex (also named LINC complex) at least composed of E2F4, E2F5, LIN9, LIN37, LIN52, LIN54, MYBL1, MYBL2, RBL1, RBL2, RBBP4, TFDP1 and TFDP2. The complex exists in quiescent cells where it represses cell cycle-dependent genes. It dissociates in S phase when LIN9, LIN37, LIN52 and LIN54 form a subcomplex that binds to MYBL2. Interacts with AATF. Interacts with KDM5A. Interacts with KMT5B and KMT5C. Interacts with USP4. Interacts with RBBP9. Post-translationally, cell-cycle arrest properties are inactivated by phosphorylation on Thr-332, Ser-640, Ser-959 and Ser-970 by CDK4.

It localises to the nucleus. Its function is as follows. Key regulator of entry into cell division. Directly involved in heterochromatin formation by maintaining overall chromatin structure and, in particular, that of constitutive heterochromatin by stabilizing histone methylation. Recruits and targets histone methyltransferases KMT5B and KMT5C, leading to epigenetic transcriptional repression. Controls histone H4 'Lys-20' trimethylation. Probably acts as a transcription repressor by recruiting chromatin-modifying enzymes to promoters. Potent inhibitor of E2F-mediated trans-activation. May act as a tumor suppressor. The chain is Retinoblastoma-like protein 1 from Rattus norvegicus (Rat).